Reading from the N-terminus, the 178-residue chain is Caveolin-1 (178 aa).

At Ser2 the chain carries N-acetylserine. Residue Ser2 is modified to Phosphoserine. A required for homooligomerization region spans residues 2–94 (SGGKYVDSEG…WKASFTTFTV (93 aa)). The Cytoplasmic segment spans residues 2–104 (SGGKYVDSEG…TKYWFYRLLS (103 aa)). Lys5 carries the post-translational modification N6-acetyllysine; alternate. A Glycyl lysine isopeptide (Lys-Gly) (interchain with G-Cter in ubiquitin); alternate cross-link involves residue Lys5. Position 6 is a phosphotyrosine (Tyr6). Ser9 bears the Phosphoserine mark. Tyr14 carries the post-translational modification Phosphotyrosine; by ABL1. A Phosphotyrosine modification is found at Tyr25. Glycyl lysine isopeptide (Lys-Gly) (interchain with G-Cter in ubiquitin) cross-links involve residues Lys26 and Lys30. Ser37 carries the phosphoserine modification. Residues Lys39, Lys47, and Lys57 each participate in a glycyl lysine isopeptide (Lys-Gly) (interchain with G-Cter in ubiquitin) cross-link. The interval 82-94 (DGIWKASFTTFTV) is interaction with CAVIN3. The helical intramembrane region spans 105-125 (ALFGIPMALVWGIYFAILSFL). The Cytoplasmic portion of the chain corresponds to 126-178 (HIWAVVPCIKSFLIEIQCISRVYSIYVHTVCDPLFEAVGKIFSNVRINLQKEI). Residues 131–142 (VPCIKSFLIEIQ) are interacts with SPRY1, SPRY2, SPRY3 and SPRY4. 3 S-palmitoyl cysteine lipidation sites follow: Cys133, Cys143, and Cys156. An interacts with SPRY1, SPRY2, and SPRY4 region spans residues 149–160 (SIYVHTVCDPLF). An interacts with SPRY1, SPRY2, SPRY3 and SPRY4 region spans residues 167 to 178 (FSNVRINLQKEI).

Belongs to the caveolin family. Homooligomer. Interacts with GLIPR2. Interacts with NOSTRIN. Interacts with SNAP25 and STX1A. Interacts (via the N-terminus) with DPP4; the interaction is direct. Interacts with CTNNB1, CDH1 and JUP. Interacts with PACSIN2; this interaction induces membrane tubulation. Interacts with SLC7A9. Interacts with BMX and BTK. Interacts with TGFBR1. Interacts with CAVIN3 (via leucine-zipper domain) in a cholesterol-sensitive manner. Interacts with CAVIN1. Interacts with EHD2 in a cholesterol-dependent manner. Forms a ternary complex with UBXN6 and VCP; mediates CAV1 targeting to lysosomes for degradation. Interacts with ABCG1; this interaction regulates ABCG1-mediated cholesterol efflux. Interacts with NEU3; this interaction enhances NEU3 sialidase activity within caveola. Interacts (via C-terminus) with SPRY1, SPRY2 (via C-terminus), SPRY3, and SPRY4. Interacts with IGFBP5; this interaction allows trafficking of IGFBP5 from the plasma membrane to the nucleus. Phosphorylated at Tyr-14 by ABL1 in response to oxidative stress. In terms of processing, ubiquitinated. Undergo monoubiquitination and multi- and/or polyubiquitination. Monoubiquitination of N-terminal lysines promotes integration in a ternary complex with UBXN6 and VCP which promotes oligomeric CAV1 targeting to lysosomes for degradation. Ubiquitinated by ZNRF1; leading to degradation and modulation of the TLR4-mediated immune response.

The protein resides in the golgi apparatus membrane. It localises to the cell membrane. It is found in the membrane. Its subcellular location is the caveola. The protein localises to the membrane raft. Its function is as follows. May act as a scaffolding protein within caveolar membranes. Forms a stable heterooligomeric complex with CAV2 that targets to lipid rafts and drives caveolae formation. Mediates the recruitment of CAVIN proteins (CAVIN1/2/3/4) to the caveolae. Interacts directly with G-protein alpha subunits and can functionally regulate their activity. Involved in the costimulatory signal essential for T-cell receptor (TCR)-mediated T-cell activation. Its binding to DPP4 induces T-cell proliferation and NF-kappa-B activation in a T-cell receptor/CD3-dependent manner. Recruits CTNNB1 to caveolar membranes and may regulate CTNNB1-mediated signaling through the Wnt pathway. Negatively regulates TGFB1-mediated activation of SMAD2/3 by mediating the internalization of TGFBR1 from membrane rafts leading to its subsequent degradation. Binds 20(S)-hydroxycholesterol (20(S)-OHC). The chain is Caveolin-1 (CAV1) from Papio anubis (Olive baboon).